The sequence spans 602 residues: SAGA complex subunit SPT8 (602 aa).

Positions 1–141 (MDEVDDILIN…REASSSTHEA (141 aa)) are disordered. Composition is skewed to acidic residues over residues 14-23 (VDDEEDDEEM) and 36-75 (EGND…DGED). Residue Thr85 is modified to Phosphothreonine. Ser108, Ser123, and Ser131 each carry phosphoserine. WD repeat units follow at residues 173 to 212 (PIQT…EGKL) and 305 to 346 (GHTQ…NEFK). Positions 366 to 418 (VSGNVNSGKENENADDDMDSLFGDEDEDEKQDAGNEPVETGDGSNGEENKEQI) are disordered. Acidic residues predominate over residues 378-395 (NADDDMDSLFGDEDEDEK). WD repeat units follow at residues 415–454 (KEQI…SPAL), 506–544 (SISG…DASN), and 560–600 (HHGG…YDID). Ser451 is modified (phosphoserine).

This sequence belongs to the WD repeat SPT8 family. In terms of assembly, component of the 1.8 MDa SAGA (Spt-Ada-Gcn5 acetyltransferase) complex, which is composed of 19 subunits TRA1, SPT7, TAF5, NGG1/ADA3, SGF73, SPT20/ADA5, SPT8, TAF12, TAF6, HFI1/ADA1, UBP8, GCN5, ADA2, SPT3, SGF29, TAF10, TAF9, SGF11 and SUS1. The SAGA complex is composed of 4 modules, namely the HAT (histone acetyltransferase) module (GCN5, ADA2, NGG1/ADA3 and SGF29), the DUB (deubiquitinating) module (UBP8, SGF11, SGF73 and SUS1), the core or TAF (TBP-associated factor) module (TAF5, TAF6, TAF9, TAF10 and TAF12), and the Tra1 or SPT (Suppressor of Ty) module (TRA1, HFI1/ADA1, SPT3, SPT7, SPT8 and SPT20/ADA5). The Tra1/SPT module binds activators, the core module recruits TBP (TATA-binding protein), the HAT module contains the histone H3 acetyltransferase GCN5, and the DUB module comprises the histone H2B deubiquitinase UBP8.

The protein resides in the nucleus. In terms of biological role, component of the transcription coactivator SAGA complex. SAGA acts as a general cofactor required for essentially all RNA polymerase II transcription. At the promoters, SAGA is required for transcription pre-initiation complex (PIC) recruitment. It influences RNA polymerase II transcriptional activity through different activities such as TBP interaction (via core/TAF module) and promoter selectivity, interaction with transcription activators (via Tra1/SPT module), and chromatin modification through histone acetylation (via HAT module) and deubiquitination (via DUB module). SAGA preferentially acetylates histones H3 (to form H3K9ac, H3K14ac, H3K18ac and H3K23ac) and H2B and deubiquitinates histone H2B. SAGA interacts with DNA via upstream activating sequences (UASs). During SAGA-mediated transcriptional inhibition, SPT3 and SPT8 prevent binding of TBP to the TATA box. The chain is SAGA complex subunit SPT8 (SPT8) from Saccharomyces cerevisiae (strain ATCC 204508 / S288c) (Baker's yeast).